The following is a 219-amino-acid chain: Octanoyltransferase (219 aa).

The 183-residue stretch at 37 to 219 (EHSPDQLWIL…DFNDVQVILQ (183 aa)) folds into the BPL/LPL catalytic domain. Residues 76-83 (RGGQVTWH), 143-145 (SLG), and 156-158 (GLA) contribute to the substrate site. The active-site Acyl-thioester intermediate is the C174.

This sequence belongs to the LipB family.

It is found in the cytoplasm. It catalyses the reaction octanoyl-[ACP] + L-lysyl-[protein] = N(6)-octanoyl-L-lysyl-[protein] + holo-[ACP] + H(+). The protein operates within protein modification; protein lipoylation via endogenous pathway; protein N(6)-(lipoyl)lysine from octanoyl-[acyl-carrier-protein]: step 1/2. Its function is as follows. Catalyzes the transfer of endogenously produced octanoic acid from octanoyl-acyl-carrier-protein onto the lipoyl domains of lipoate-dependent enzymes. Lipoyl-ACP can also act as a substrate although octanoyl-ACP is likely to be the physiological substrate. This chain is Octanoyltransferase, found in Acinetobacter baylyi (strain ATCC 33305 / BD413 / ADP1).